The chain runs to 209 residues: Large ribosomal subunit protein uL3 (209 aa).

Positions 128–163 (AHRGPMTHGSKFHRAVGSMGASSDPSRTFKNKRMPG) are disordered.

It belongs to the universal ribosomal protein uL3 family. As to quaternary structure, part of the 50S ribosomal subunit. Forms a cluster with proteins L14 and L19.

One of the primary rRNA binding proteins, it binds directly near the 3'-end of the 23S rRNA, where it nucleates assembly of the 50S subunit. The protein is Large ribosomal subunit protein uL3 of Clostridium botulinum (strain 657 / Type Ba4).